Consider the following 122-residue polypeptide: MAITKEDILEAVGSLTVMELNDLVKAFEEKFGVSAAAVAVASSAGPAAAAEEKTEFDVVLASAGDQKVGVIKVVRAITGLGLKEAKDIVDGAPKTIKEGVSKAEAEDIQKQLEEAGAKVEIK.

The protein belongs to the bacterial ribosomal protein bL12 family. In terms of assembly, homodimer. Part of the ribosomal stalk of the 50S ribosomal subunit. Forms a multimeric L10(L12)X complex, where L10 forms an elongated spine to which 2 to 4 L12 dimers bind in a sequential fashion. Binds GTP-bound translation factors.

Forms part of the ribosomal stalk which helps the ribosome interact with GTP-bound translation factors. Is thus essential for accurate translation. The polypeptide is Large ribosomal subunit protein bL12 (Neisseria lactamica).